Here is a 356-residue protein sequence, read N- to C-terminus: Phosphoribosylformylglycinamidine cyclo-ligase (356 aa).

It belongs to the AIR synthase family.

Its subcellular location is the cytoplasm. The enzyme catalyses 2-formamido-N(1)-(5-O-phospho-beta-D-ribosyl)acetamidine + ATP = 5-amino-1-(5-phospho-beta-D-ribosyl)imidazole + ADP + phosphate + H(+). Its pathway is purine metabolism; IMP biosynthesis via de novo pathway; 5-amino-1-(5-phospho-D-ribosyl)imidazole from N(2)-formyl-N(1)-(5-phospho-D-ribosyl)glycinamide: step 2/2. The polypeptide is Phosphoribosylformylglycinamidine cyclo-ligase (Nitrobacter hamburgensis (strain DSM 10229 / NCIMB 13809 / X14)).